The following is a 139-amino-acid chain: Holo-[acyl-carrier-protein] synthase (139 aa).

Residues D8 and E61 each contribute to the Mg(2+) site.

The protein belongs to the P-Pant transferase superfamily. AcpS family. Mg(2+) serves as cofactor.

The protein localises to the cytoplasm. It carries out the reaction apo-[ACP] + CoA = holo-[ACP] + adenosine 3',5'-bisphosphate + H(+). Transfers the 4'-phosphopantetheine moiety from coenzyme A to a Ser of acyl-carrier-protein. The protein is Holo-[acyl-carrier-protein] synthase of Rhodopseudomonas palustris (strain BisB5).